The primary structure comprises 76 residues: Exodeoxyribonuclease 7 small subunit (76 aa).

It belongs to the XseB family. In terms of assembly, heterooligomer composed of large and small subunits.

It is found in the cytoplasm. The enzyme catalyses Exonucleolytic cleavage in either 5'- to 3'- or 3'- to 5'-direction to yield nucleoside 5'-phosphates.. Bidirectionally degrades single-stranded DNA into large acid-insoluble oligonucleotides, which are then degraded further into small acid-soluble oligonucleotides. This Staphylococcus haemolyticus (strain JCSC1435) protein is Exodeoxyribonuclease 7 small subunit.